Reading from the N-terminus, the 255-residue chain is NADPH-dependent FMN reductase ArsH (255 aa).

Residue 43 to 50 (SLRARSFS) participates in FMN binding.

It belongs to the ArsH family. As to quaternary structure, homotetramer. FMN is required as a cofactor.

In terms of biological role, has NADPH-dependent FMN reductase activity and very low azoreductase activity. No activity with NADH. This chain is NADPH-dependent FMN reductase ArsH, found in Shigella flexneri.